Consider the following 752-residue polypeptide: Catalase-peroxidase (752 aa).

Positions 1-21 (MSNESKCPFHQTAGGGTTNRD) are disordered. The tryptophyl-tyrosyl-methioninium (Trp-Tyr) (with M-271) cross-link spans 91-245 (WHSAGTYRIG…LAAVQMGLIY (155 aa)). Catalysis depends on histidine 92, which acts as the Proton acceptor. Residues 204–228 (QAPGQGDLVAEPAKHGEEQNRDLSA) are disordered. Positions 215–228 (PAKHGEEQNRDLSA) are enriched in basic and acidic residues. The tryptophyl-tyrosyl-methioninium (Tyr-Met) (with W-91) cross-link spans 245-271 (YVNPEGPEGNPDPVASGKDIRETFGRM). Histidine 286 is a heme binding site. The segment at 366-391 (AHQWQPKEGKGAGTVPDAHDPSKRHA) is disordered.

The protein belongs to the peroxidase family. Peroxidase/catalase subfamily. As to quaternary structure, homodimer or homotetramer. Requires heme b as cofactor. Formation of the three residue Trp-Tyr-Met cross-link is important for the catalase, but not the peroxidase activity of the enzyme.

The enzyme catalyses H2O2 + AH2 = A + 2 H2O. It carries out the reaction 2 H2O2 = O2 + 2 H2O. Functionally, bifunctional enzyme with both catalase and broad-spectrum peroxidase activity. The protein is Catalase-peroxidase of Pseudomonas putida (strain W619).